The chain runs to 60 residues: DNA gyrase inhibitor YacG (60 aa).

Zn(2+) contacts are provided by C3, C6, C18, and C22. The tract at residues 38–60 (PASSEDEEEPLDQEAETPVAPRH) is disordered. Residues 41–52 (SEDEEEPLDQEA) are compositionally biased toward acidic residues.

It belongs to the DNA gyrase inhibitor YacG family. Interacts with GyrB. It depends on Zn(2+) as a cofactor.

Inhibits all the catalytic activities of DNA gyrase by preventing its interaction with DNA. Acts by binding directly to the C-terminal domain of GyrB, which probably disrupts DNA binding by the gyrase. This Ruegeria pomeroyi (strain ATCC 700808 / DSM 15171 / DSS-3) (Silicibacter pomeroyi) protein is DNA gyrase inhibitor YacG.